We begin with the raw amino-acid sequence, 23 residues long: Retinol-binding protein 3 (23 aa).

It localises to the secreted. The protein resides in the extracellular space. Its subcellular location is the extracellular matrix. It is found in the interphotoreceptor matrix. Functionally, IRBP shuttles 11-cis and all trans retinoids between the retinol isomerase in the pigment epithelium and the visual pigments in the photoreceptor cells of the retina. This is Retinol-binding protein 3 (RBP3) from Oryctolagus cuniculus (Rabbit).